The sequence spans 224 residues: LexA repressor (224 aa).

A DNA-binding region (H-T-H motif) is located at residues 31 to 51 (RAEIAAELGFKSANAAEEHLQ). Residues S142 and K179 each act as for autocatalytic cleavage activity in the active site.

It belongs to the peptidase S24 family. As to quaternary structure, homodimer.

The catalysed reaction is Hydrolysis of Ala-|-Gly bond in repressor LexA.. Functionally, represses a number of genes involved in the response to DNA damage (SOS response), including recA and lexA. In the presence of single-stranded DNA, RecA interacts with LexA causing an autocatalytic cleavage which disrupts the DNA-binding part of LexA, leading to derepression of the SOS regulon and eventually DNA repair. This chain is LexA repressor, found in Acidovorax ebreus (strain TPSY) (Diaphorobacter sp. (strain TPSY)).